The following is a 282-amino-acid chain: Protein DOG1-like 3 (282 aa).

Residues E11–Q254 enclose the DOG1 domain.

In Arabidopsis thaliana (Mouse-ear cress), this protein is Protein DOG1-like 3.